The sequence spans 122 residues: Large ribosomal subunit protein uL14 (122 aa).

Belongs to the universal ribosomal protein uL14 family. As to quaternary structure, part of the 50S ribosomal subunit. Forms a cluster with proteins L3 and L19. In the 70S ribosome, L14 and L19 interact and together make contacts with the 16S rRNA in bridges B5 and B8.

Binds to 23S rRNA. Forms part of two intersubunit bridges in the 70S ribosome. The protein is Large ribosomal subunit protein uL14 of Lachnospira eligens (strain ATCC 27750 / DSM 3376 / VPI C15-48 / C15-B4) (Eubacterium eligens).